Consider the following 185-residue polypeptide: MTKDVINDMKSHMEKSVESLRREYQKVRTGRANTGLLDEIRVDFYGNPSPLNQVATLAVPEPRTITIQPWETKMIPVIEKAILNANLGFTPSNDGKLIRISLPPLTEERRKEIVKSLKKTAEDAKIAIRNIRRDAIDGLKKLEKDKKISEDDLKRAEKEVQDVTNVYVAKVDEVLAHKEKEVMEV.

This sequence belongs to the RRF family.

Its subcellular location is the cytoplasm. Functionally, responsible for the release of ribosomes from messenger RNA at the termination of protein biosynthesis. May increase the efficiency of translation by recycling ribosomes from one round of translation to another. The protein is Ribosome-recycling factor of Geobacter sulfurreducens (strain ATCC 51573 / DSM 12127 / PCA).